A 331-amino-acid polypeptide reads, in one-letter code: Nucleotide sugar transporter SLC35B4 (331 aa).

A run of 11 helical transmembrane segments spans residues 4–24 (ALAVGLVFAGCCSNVIFLELL), 30–50 (GCGNIVTFAQFLFIAVEGFLF), 59–79 (PAIPIRYYAIMVTMFFTVSVV), 92–112 (LHMIFRSGSLIANMILGIIIL), 117–137 (SIFKYTSIALVSVGIFICTFM), 153–173 (GFQAFVWWLLGIGALTFALLM), 201–221 (ALPLPGFVFLASDIYDHAVLF), 229–249 (IPVIGVTLPIMWFYLLMNIIT), 251–267 (YVCIRGVFILTTECASL), 268–288 (TVTLVVTLRKFVSLIFSILYF), and 291–311 (PFTLWHWLGTLFVFIGTLMYT). Positions 326 to 331 (KDSKKN) match the Mediates endoplasmic reticulum retention motif.

The protein belongs to the nucleotide-sugar transporter family. SLC35B subfamily.

It is found in the endoplasmic reticulum membrane. It catalyses the reaction UDP-N-acetyl-alpha-D-glucosamine(in) + UDP-alpha-D-glucuronate(out) = UDP-N-acetyl-alpha-D-glucosamine(out) + UDP-alpha-D-glucuronate(in). It carries out the reaction UDP-alpha-D-xylose(in) + UDP-alpha-D-glucuronate(out) = UDP-alpha-D-xylose(out) + UDP-alpha-D-glucuronate(in). Functionally, antiporter that transports nucleotide sugars across the endoplasmic reticulum (ER) membrane in exchange for another nucleotide sugar. May couple UDP-alpha-D-glucuronate (UDP-GlcA) or UDP-alpha-D-xylose (UDP-Xyl) efflux to UDP-alpha-D-glucuronate (UDP-GlcA) influx into the ER lumen, which in turn stimulates glucuronidation and excretion of endobiotics and xenobiotics. Has UDP-GlcA:UDP-GlcNAc antiporter activity. This Homo sapiens (Human) protein is Nucleotide sugar transporter SLC35B4 (SLC35B4).